Reading from the N-terminus, the 491-residue chain is Ketol-acid reductoisomerase (NADP(+)) (491 aa).

One can recognise a KARI N-terminal Rossmann domain in the interval 15-208; it reads AQLGKCRFMG…GGHRAGVLES (194 aa). NADP(+) is bound by residues 45-48, Arg-68, Arg-76, Ser-78, and 108-110; these read CGAQ and DKQ. His-132 is an active-site residue. An NADP(+)-binding site is contributed by Gly-158. 2 KARI C-terminal knotted domains span residues 209-344 and 345-484; these read SFVA…TAPQ and YEGK…MTDM. Residues Asp-217, Glu-221, Glu-389, and Glu-393 each coordinate Mg(2+). Ser-414 contacts substrate.

It belongs to the ketol-acid reductoisomerase family. Mg(2+) serves as cofactor.

The enzyme catalyses (2R)-2,3-dihydroxy-3-methylbutanoate + NADP(+) = (2S)-2-acetolactate + NADPH + H(+). The catalysed reaction is (2R,3R)-2,3-dihydroxy-3-methylpentanoate + NADP(+) = (S)-2-ethyl-2-hydroxy-3-oxobutanoate + NADPH + H(+). Its pathway is amino-acid biosynthesis; L-isoleucine biosynthesis; L-isoleucine from 2-oxobutanoate: step 2/4. It participates in amino-acid biosynthesis; L-valine biosynthesis; L-valine from pyruvate: step 2/4. Involved in the biosynthesis of branched-chain amino acids (BCAA). Catalyzes an alkyl-migration followed by a ketol-acid reduction of (S)-2-acetolactate (S2AL) to yield (R)-2,3-dihydroxy-isovalerate. In the isomerase reaction, S2AL is rearranged via a Mg-dependent methyl migration to produce 3-hydroxy-3-methyl-2-ketobutyrate (HMKB). In the reductase reaction, this 2-ketoacid undergoes a metal-dependent reduction by NADPH to yield (R)-2,3-dihydroxy-isovalerate. The protein is Ketol-acid reductoisomerase (NADP(+)) of Escherichia coli O157:H7.